The primary structure comprises 479 residues: D-aminoacyl-tRNA deacylase (479 aa).

The protein belongs to the DtdA deacylase family. As to quaternary structure, monomer. Zn(2+) is required as a cofactor.

The catalysed reaction is a D-aminoacyl-tRNA + H2O = a tRNA + a D-alpha-amino acid + H(+). It catalyses the reaction glycyl-tRNA(Ala) + H2O = tRNA(Ala) + glycine + H(+). In terms of biological role, D-aminoacyl-tRNA deacylase with broad substrate specificity. By recycling D-aminoacyl-tRNA to D-amino acids and free tRNA molecules, this enzyme counteracts the toxicity associated with the formation of D-aminoacyl-tRNA entities in vivo. In Methanococcoides burtonii (strain DSM 6242 / NBRC 107633 / OCM 468 / ACE-M), this protein is D-aminoacyl-tRNA deacylase.